The following is a 201-amino-acid chain: Coat protein (201 aa).

The protein belongs to the potexvirus capsid protein family.

It localises to the virion. Functionally, required for genome encapsidation. Forms ribonucleoprotein complexes along with TGB1 helicase and viral RNA. This chain is Coat protein, found in Lilium formosanum.